Here is a 348-residue protein sequence, read N- to C-terminus: Centromere protein N (348 aa).

The protein belongs to the CENP-N/CHL4 family.

It localises to the nucleus. The protein resides in the chromosome. It is found in the centromere. Probable component of a centromeric complex involved in assembly of kinetochore proteins, mitotic progression and chromosome segregation. This Xenopus tropicalis (Western clawed frog) protein is Centromere protein N (cenpn).